A 131-amino-acid polypeptide reads, in one-letter code: Plastocyanin (131 aa).

Residues 1-34 form the signal peptide; the sequence is MKFFASLSKRFAPVLSLVVLVAGTLLLSAAPASA. One can recognise a Plastocyanin-like domain in the interval 35–131; the sequence is ATVQIKMGTD…AGMVGTITVE (97 aa). 4 residues coordinate Cu cation: His73, Cys116, His119, and Met124.

This sequence belongs to the plastocyanin family. The cofactor is Cu(2+).

The protein localises to the cellular thylakoid membrane. In terms of biological role, participates in electron transfer between P700 and the cytochrome b6-f complex in photosystem I. The sequence is that of Plastocyanin (petE) from Prochlorothrix hollandica.